The following is a 285-amino-acid chain: Geranyl diphosphate 2-C-methyltransferase (285 aa).

Belongs to the geranyl diphosphate 2-C-methyltransferase family. Mg(2+) is required as a cofactor.

The catalysed reaction is (2E)-geranyl diphosphate + S-adenosyl-L-methionine = (E)-2-methylgeranyl diphosphate + S-adenosyl-L-homocysteine + H(+). Its function is as follows. Catalyzes the SAM-dependent methylation of geranyl diphosphate (GPP) to yield (E)-2-methylgeranyl diphosphate (2-MeGPP). This chain is Geranyl diphosphate 2-C-methyltransferase, found in Saccharopolyspora erythraea (strain ATCC 11635 / DSM 40517 / JCM 4748 / NBRC 13426 / NCIMB 8594 / NRRL 2338).